The chain runs to 821 residues: Frameshifted structural polyprotein (821 aa).

A disordered region spans residues 1–106; that stretch reads MNRGFFNMLG…KPKPGKRQRM (106 aa). A compositionally biased stretch (polar residues) spans 38–49; that stretch reads LASQIQQLTTAV. Basic residues predominate over residues 67-106; the sequence is PPPRQKKQAPKQPPKPKKPKTQEKKKKQPAKPKPGKRQRM. The tract at residues 93 to 101 is ribosome-binding; that stretch reads KQPAKPKPG. A Peptidase S3 domain is found at 114-264; the sequence is RLFDVKNEDG…KTTPEGTEEW (151 aa). Residues His-141, Asp-163, and Ser-215 each act as charge relay system in the active site. A functions as an uncleaved signal peptide for the precursor of protein E3/E2 region spans residues 265 to 279; sequence SAAPLVTAMCLLGNV. A glycan (N-linked (GlcNAc...) asparagine; by host) is linked at Asn-278. Cysteines 283 and 289 form a disulfide. N-linked (GlcNAc...) asparagine; by host glycans are attached at residues Asn-524 and Asn-646. A helical transmembrane segment spans residues 696 to 716; it reads ILAVASATVAMMIGVTVAVLC. S-palmitoyl cysteine; by host attachment occurs at residues Cys-724, Cys-744, and Cys-745. Transmembrane regions (helical) follow at residues 726 to 746 and 764 to 784; these read TPYA…LCCV and NSQP…IVLM.

It belongs to the alphavirus frameshifted structural polyprotein family. In terms of assembly, homomultimer. Interacts with host karyopherin KPNA4; this interaction allows the nuclear import of the viral capsid protein. Interacts with spike glycoprotein E2. Interacts with host IRAK1; the interaction leads to inhibition of IRAK1-dependent signaling. As to quaternary structure, the precursor of protein E3/E2 and E1 form a heterodimer shortly after synthesis. Processing of the precursor of protein E3/E2 into E2 and E3 results in a heterodimer of the spike glycoproteins E2 and E1. Spike at virion surface are constituted of three E2-E1 heterodimers. In terms of processing, specific enzymatic cleavages in vivo yield mature proteins. Capsid protein is auto-cleaved during polyprotein translation, unmasking a signal peptide at the N-terminus of the precursor of E3/E2. The remaining polyprotein is then targeted to the host endoplasmic reticulum, where host signal peptidase cleaves it into pE2 and TF. pE2 is further processed to mature E3 and E2 by host furin in trans-Golgi vesicle. Post-translationally, palmitoylated via thioester bonds. These palmitoylations may induce disruption of the C-terminus transmembrane. This would result in the reorientation of E2 C-terminus from lumenal to cytoplasmic side. Palmitoylated via thioester bonds.

It localises to the virion. It is found in the host cytoplasm. The protein resides in the host cell membrane. Its subcellular location is the host nucleus. The protein localises to the virion membrane. It catalyses the reaction Autocatalytic release of the core protein from the N-terminus of the togavirus structural polyprotein by hydrolysis of a -Trp-|-Ser- bond.. Functionally, forms an icosahedral capsid with a T=4 symmetry composed of 240 copies of the capsid protein surrounded by a lipid membrane through which penetrate 80 spikes composed of trimers of E1-E2 heterodimers. The capsid protein binds to the viral RNA genome at a site adjacent to a ribosome binding site for viral genome translation following genome release. Possesses a protease activity that results in its autocatalytic cleavage from the nascent structural protein. Following its self-cleavage, the capsid protein transiently associates with ribosomes, and within several minutes the protein binds to viral RNA and rapidly assembles into icosahedric core particles. The resulting nucleocapsid eventually associates with the cytoplasmic domain of the spike glycoprotein E2 at the cell membrane, leading to budding and formation of mature virions. In case of infection, new virions attach to target cells and after clathrin-mediated endocytosis their membrane fuses with the host endosomal membrane. This leads to the release of the nucleocapsid into the cytoplasm, followed by an uncoating event necessary for the genomic RNA to become accessible. The uncoating might be triggered by the interaction of capsid proteins with ribosomes. Binding of ribosomes would release the genomic RNA since the same region is genomic RNA-binding and ribosome-binding. Specifically inhibits interleukin-1 receptor-associated kinase 1/IRAK1-dependent signaling during viral entry, representing a means by which the alphaviruses may evade innate immune detection and activation prior to viral gene expression. Provides the signal sequence for the translocation of the precursor of protein E3/E2 to the host endoplasmic reticulum. Furin-cleaved E3 remains associated with spike glycoprotein E1 and mediates pH protection of the latter during the transport via the secretory pathway. After virion release from the host cell, the assembly protein E3 is gradually released in the extracellular space. In terms of biological role, plays an essential role in viral attachment to target host cell, by binding to the cell receptor. Synthesized as a pE2 precursor which is processed by furin at the cell membrane just before virion budding, giving rise to E2-E1 heterodimer. The pE2-E1 heterodimer is stable, whereas E2-E1 is unstable and dissociate at low pH. pE2 is processed at the last step, presumably to avoid E1 fusion activation before its final export to cell surface. E2 C-terminus contains a transitory transmembrane that would be disrupted by palmitoylation, resulting in reorientation of the C-terminal tail from lumenal to cytoplasmic side. This step is critical since E2 C-terminus is involved in budding by interacting with capsid proteins. This release of E2 C-terminus in cytoplasm occurs lately in protein export, and precludes premature assembly of particles at the endoplasmic reticulum membrane. Its function is as follows. Plays a role in viral assembly and release. This is Frameshifted structural polyprotein from Sindbis virus (SINV).